Here is a 276-residue protein sequence, read N- to C-terminus: Secreted RxLR effector protein 85 (276 aa).

The signal sequence occupies residues 1-27 (MRYCAFRLGLFFIGYSCCVLLSTPTLA). The RxLR signature appears at 110–113 (RQLR).

This sequence belongs to the RxLR effector family.

The protein resides in the secreted. The protein localises to the host cell membrane. Secreted effector that partially suppresses the host cell death induced by cell death-inducing proteins. This is Secreted RxLR effector protein 85 from Plasmopara viticola (Downy mildew of grapevine).